Reading from the N-terminus, the 488-residue chain is Aspartyl/glutamyl-tRNA(Asn/Gln) amidotransferase subunit B (488 aa).

It belongs to the GatB/GatE family. GatB subfamily. In terms of assembly, heterotrimer of A, B and C subunits.

The catalysed reaction is L-glutamyl-tRNA(Gln) + L-glutamine + ATP + H2O = L-glutaminyl-tRNA(Gln) + L-glutamate + ADP + phosphate + H(+). It catalyses the reaction L-aspartyl-tRNA(Asn) + L-glutamine + ATP + H2O = L-asparaginyl-tRNA(Asn) + L-glutamate + ADP + phosphate + 2 H(+). Its function is as follows. Allows the formation of correctly charged Asn-tRNA(Asn) or Gln-tRNA(Gln) through the transamidation of misacylated Asp-tRNA(Asn) or Glu-tRNA(Gln) in organisms which lack either or both of asparaginyl-tRNA or glutaminyl-tRNA synthetases. The reaction takes place in the presence of glutamine and ATP through an activated phospho-Asp-tRNA(Asn) or phospho-Glu-tRNA(Gln). The sequence is that of Aspartyl/glutamyl-tRNA(Asn/Gln) amidotransferase subunit B from Chlamydia trachomatis serovar A (strain ATCC VR-571B / DSM 19440 / HAR-13).